Here is a 116-residue protein sequence, read N- to C-terminus: Large ribosomal subunit protein bL20c (116 aa).

Belongs to the bacterial ribosomal protein bL20 family.

It localises to the plastid. Its subcellular location is the chloroplast. Binds directly to 23S ribosomal RNA and is necessary for the in vitro assembly process of the 50S ribosomal subunit. It is not involved in the protein synthesizing functions of that subunit. The protein is Large ribosomal subunit protein bL20c of Oltmannsiellopsis viridis (Marine flagellate).